A 286-amino-acid chain; its full sequence is UPF0761 membrane protein KPK_5501 (286 aa).

A run of 7 helical transmembrane segments spans residues 44-64 (LLSL…FPMF), 74-94 (FIFA…IEQF), 104-124 (VGAF…DSAL), 140-160 (FAVY…SLAI), 183-203 (LFPL…VPTT), 210-230 (AVIG…AFAL), and 244-264 (VISV…IVLL).

It belongs to the UPF0761 family.

The protein resides in the cell inner membrane. In Klebsiella pneumoniae (strain 342), this protein is UPF0761 membrane protein KPK_5501.